Consider the following 41-residue polypeptide: Large ribosomal subunit protein bL36 (41 aa).

Belongs to the bacterial ribosomal protein bL36 family.

The polypeptide is Large ribosomal subunit protein bL36 (rpmJ) (Agrobacterium fabrum (strain C58 / ATCC 33970) (Agrobacterium tumefaciens (strain C58))).